Here is a 174-residue protein sequence, read N- to C-terminus: NADH-ubiquinone oxidoreductase chain 6 (174 aa).

The next 4 membrane-spanning stretches (helical) occupy residues 25–45 (SMGLMLLIQTFLTCLITGIYV), 48–68 (FWFSYVLFLIFLGGMLILFIY), 82–102 (FKLTMFSLVLFSLSMVIFFIL), and 143–163 (LITLLLINYLFLTLLVTVKIT).

Belongs to the complex I subunit 6 family.

Its subcellular location is the mitochondrion membrane. The catalysed reaction is a ubiquinone + NADH + 5 H(+)(in) = a ubiquinol + NAD(+) + 4 H(+)(out). Core subunit of the mitochondrial membrane respiratory chain NADH dehydrogenase (Complex I) that is believed to belong to the minimal assembly required for catalysis. Complex I functions in the transfer of electrons from NADH to the respiratory chain. The immediate electron acceptor for the enzyme is believed to be ubiquinone. The polypeptide is NADH-ubiquinone oxidoreductase chain 6 (mt:ND6) (Anopheles gambiae (African malaria mosquito)).